Here is a 60-residue protein sequence, read N- to C-terminus: Sperm protamine P1 (60 aa).

Residues 1 to 60 are disordered; sequence MARYRHSRSRSRSRYRRRRRRRSRYRSQRRRYRGRRRRRSRRGRRRGYSRRRYSRRRRRY.

The protein belongs to the protamine P1 family. In terms of tissue distribution, testis.

The protein resides in the nucleus. The protein localises to the chromosome. In terms of biological role, protamines substitute for histones in the chromatin of sperm during the haploid phase of spermatogenesis. They compact sperm DNA into a highly condensed, stable and inactive complex. The sequence is that of Sperm protamine P1 (PRM1) from Osphranter rufus (Red kangaroo).